Consider the following 509-residue polypeptide: Heat shock 70 kDa protein 14 (509 aa).

Belongs to the heat shock protein 70 family. In terms of assembly, component of ribosome-associated complex (RAC), a heterodimer composed of Hsp70/DnaK-type chaperone HSPA14 and Hsp40/DnaJ-type chaperone DNAJC2.

It localises to the cytoplasm. The protein localises to the cytosol. Component of the ribosome-associated complex (RAC), a complex involved in folding or maintaining nascent polypeptides in a folding-competent state. In the RAC complex, binds to the nascent polypeptide chain, while DNAJC2 stimulates its ATPase activity. In Pongo abelii (Sumatran orangutan), this protein is Heat shock 70 kDa protein 14 (HSPA14).